The sequence spans 265 residues: Hydroxyethylthiazole kinase (265 aa).

M36 is a binding site for substrate. ATP contacts are provided by K112 and S160. G187 contributes to the substrate binding site.

This sequence belongs to the Thz kinase family. Mg(2+) serves as cofactor.

It carries out the reaction 5-(2-hydroxyethyl)-4-methylthiazole + ATP = 4-methyl-5-(2-phosphooxyethyl)-thiazole + ADP + H(+). Its pathway is cofactor biosynthesis; thiamine diphosphate biosynthesis; 4-methyl-5-(2-phosphoethyl)-thiazole from 5-(2-hydroxyethyl)-4-methylthiazole: step 1/1. Its function is as follows. Catalyzes the phosphorylation of the hydroxyl group of 4-methyl-5-beta-hydroxyethylthiazole (THZ). The chain is Hydroxyethylthiazole kinase from Clostridium perfringens (strain SM101 / Type A).